Reading from the N-terminus, the 177-residue chain is Ribosome maturation factor RimM (177 aa).

The region spanning 92–166 (EDTFYHADLM…RIVVVPDTNP (75 aa)) is the PRC barrel domain.

The protein belongs to the RimM family. As to quaternary structure, binds ribosomal protein uS19.

Its subcellular location is the cytoplasm. Functionally, an accessory protein needed during the final step in the assembly of 30S ribosomal subunit, possibly for assembly of the head region. Essential for efficient processing of 16S rRNA. May be needed both before and after RbfA during the maturation of 16S rRNA. It has affinity for free ribosomal 30S subunits but not for 70S ribosomes. The sequence is that of Ribosome maturation factor RimM from Azorhizobium caulinodans (strain ATCC 43989 / DSM 5975 / JCM 20966 / LMG 6465 / NBRC 14845 / NCIMB 13405 / ORS 571).